We begin with the raw amino-acid sequence, 257 residues long: Diaminopimelate epimerase (257 aa).

Positions 13, 46, and 66 each coordinate substrate. C75 (proton donor) is an active-site residue. Residues 76-77, N145, N175, and 193-194 each bind substrate; these read GN and ER. C202 functions as the Proton acceptor in the catalytic mechanism. Position 203–204 (203–204) interacts with substrate; the sequence is GS.

The protein belongs to the diaminopimelate epimerase family. In terms of assembly, homodimer.

The protein localises to the cytoplasm. The enzyme catalyses (2S,6S)-2,6-diaminopimelate = meso-2,6-diaminopimelate. The protein operates within amino-acid biosynthesis; L-lysine biosynthesis via DAP pathway; DL-2,6-diaminopimelate from LL-2,6-diaminopimelate: step 1/1. In terms of biological role, catalyzes the stereoinversion of LL-2,6-diaminopimelate (L,L-DAP) to meso-diaminopimelate (meso-DAP), a precursor of L-lysine and an essential component of the bacterial peptidoglycan. This Gluconobacter oxydans (strain 621H) (Gluconobacter suboxydans) protein is Diaminopimelate epimerase.